Consider the following 321-residue polypeptide: 5,10-methylenetetrahydromethanopterin reductase (321 aa).

Belongs to the mer family.

The protein resides in the cytoplasm. The enzyme catalyses 5-methyl-5,6,7,8-tetrahydromethanopterin + oxidized coenzyme F420-(gamma-L-Glu)(n) + H(+) = 5,10-methylenetetrahydromethanopterin + reduced coenzyme F420-(gamma-L-Glu)(n). Its pathway is one-carbon metabolism; methanogenesis from CO(2); methyl-coenzyme M from 5,10-methylene-5,6,7,8-tetrahydromethanopterin: step 1/2. In terms of biological role, catalyzes the reversible reduction of methylene-H(4)MPT to methyl-H(4)MPT. This is 5,10-methylenetetrahydromethanopterin reductase from Methanothermobacter thermautotrophicus (strain ATCC 29096 / DSM 1053 / JCM 10044 / NBRC 100330 / Delta H) (Methanobacterium thermoautotrophicum).